Here is a 353-residue protein sequence, read N- to C-terminus: Keratocan (353 aa).

The N-terminal stretch at 1-21 (MMTLKVCPSLLLLFLVHSVWT) is a signal peptide. Positions 34–72 (EHWSHYTFECPQECFCPPSFPNALYCDNKGLKEIPAIPA) constitute an LRRNT domain. Disulfide bonds link Cys43/Cys49 and Cys47/Cys59. LRR repeat units lie at residues 73–94 (RIWY…PFVN), 97–118 (HLRW…SGVL), 123–143 (RLLY…PLPV), 144–165 (GLEQ…VFSN), 168–188 (NLTM…QSDT), 194–214 (SLMQ…SIPA), 215–236 (NTLQ…YFSA), and 239–259 (KVTF…PPNG). Asn94 is a glycosylation site (N-linked (GlcNAc...) (keratan sulfate) asparagine). Asn168 carries an N-linked (GlcNAc...) asparagine glycan. The N-linked (GlcNAc...) (keratan sulfate) asparagine glycan is linked to Asn223. An N-linked (GlcNAc...) (keratan sulfate) asparagine glycan is attached at Asn261. 2 LRR repeats span residues 264-283 (SILD…PINA) and 284-305 (HLEH…QICP). Asn299 is a glycosylation site (N-linked (GlcNAc...) asparagine). An intrachain disulfide couples Cys304 to Cys344.

It belongs to the small leucine-rich proteoglycan (SLRP) family. SLRP class II subfamily. In terms of tissue distribution, cornea.

The protein resides in the secreted. The protein localises to the extracellular space. Its subcellular location is the extracellular matrix. Its function is as follows. Plays an important role in generating and maintaining a transparent matrix within the corneal stroma. This chain is Keratocan (KERA), found in Coturnix japonica (Japanese quail).